We begin with the raw amino-acid sequence, 316 residues long: Haloacid dehalogenase-like hydrolase domain-containing protein At4g39970 (316 aa).

The transit peptide at 1–46 directs the protein to the chloroplast; it reads MAVSCNHSAILFSPSSTAGSSSVTSSSSLIGFPRFQTLRFKSRSVY. Aspartate 69 functions as the Nucleophile in the catalytic mechanism. 3 residues coordinate Mg(2+): aspartate 69, aspartate 71, and aspartate 259. Aspartate 71 functions as the Proton donor in the catalytic mechanism.

This sequence belongs to the HAD-like hydrolase superfamily. DOG/GPP family. Requires Mg(2+) as cofactor.

Its subcellular location is the plastid. It is found in the chloroplast. This Arabidopsis thaliana (Mouse-ear cress) protein is Haloacid dehalogenase-like hydrolase domain-containing protein At4g39970.